Consider the following 157-residue polypeptide: S-ribosylhomocysteine lyase (157 aa).

Fe cation contacts are provided by His54, His58, and Cys124.

Belongs to the LuxS family. As to quaternary structure, homodimer. It depends on Fe cation as a cofactor.

The catalysed reaction is S-(5-deoxy-D-ribos-5-yl)-L-homocysteine = (S)-4,5-dihydroxypentane-2,3-dione + L-homocysteine. Functionally, involved in the synthesis of autoinducer 2 (AI-2) which is secreted by bacteria and is used to communicate both the cell density and the metabolic potential of the environment. The regulation of gene expression in response to changes in cell density is called quorum sensing. Catalyzes the transformation of S-ribosylhomocysteine (RHC) to homocysteine (HC) and 4,5-dihydroxy-2,3-pentadione (DPD). This Oenococcus oeni (strain ATCC BAA-331 / PSU-1) protein is S-ribosylhomocysteine lyase.